Here is a 368-residue protein sequence, read N- to C-terminus: WAT1-related protein At5g40240 (368 aa).

The next 10 helical transmembrane spans lie at 18-38 (VVPFAAMFAVECATVGSNTLF), 50-70 (VFVFYSYIVSTLLLLPLSVIF), 82-102 (PLFFKIFLLGLVGFMSQIAGC), 111-131 (TLASAISNLTPAFTFTLAVIF), 142-162 (ATQAKIIGAILSISGALVVVL), 194-214 (WIIGGLLLASQYFLISVWYIL), 226-246 (ITVVFFYNLFATLISVPVCLF), 260-280 (ISLAAIIYSGVFVSLFSALTH), 292-312 (ISLFRPLSIAIAVAMGAIFLG), and 315-335 (LHLGSVIGSMILCIGFYTVIW). EamA domains are found at residues 33-161 (GSNT…LVVV) and 208-334 (ISVW…YTVI).

This sequence belongs to the drug/metabolite transporter (DMT) superfamily. Plant drug/metabolite exporter (P-DME) (TC 2.A.7.4) family.

Its subcellular location is the membrane. This Arabidopsis thaliana (Mouse-ear cress) protein is WAT1-related protein At5g40240.